A 148-amino-acid polypeptide reads, in one-letter code: Large ribosomal subunit protein bL9 (148 aa).

It belongs to the bacterial ribosomal protein bL9 family.

Binds to the 23S rRNA. The protein is Large ribosomal subunit protein bL9 of Pseudomonas putida (strain ATCC 700007 / DSM 6899 / JCM 31910 / BCRC 17059 / LMG 24140 / F1).